Reading from the N-terminus, the 708-residue chain is ATP-dependent DNA helicase Hel308 (708 aa).

Residues Q28 and 46–53 (TATASGKS) contribute to the ATP site. Residues 33–198 (RAGIFDGRSV…WLGARLVESS (166 aa)) form the Helicase ATP-binding domain. Residues 143–146 (DEIH) carry the DEAH box motif. The 199-residue stretch at 231-429 (EVALAVDAVA…EPNLRAHVLG (199 aa)) folds into the Helicase C-terminal domain.

This sequence belongs to the helicase family. Hel308 subfamily. In terms of assembly, monomer.

It catalyses the reaction Couples ATP hydrolysis with the unwinding of duplex DNA by translocating in the 3'-5' direction.. The enzyme catalyses ATP + H2O = ADP + phosphate + H(+). In terms of biological role, DNA-dependent ATPase and 3'-5' DNA helicase that may be involved in repair of stalled replication forks. The protein is ATP-dependent DNA helicase Hel308 of Pyrobaculum calidifontis (strain DSM 21063 / JCM 11548 / VA1).